A 228-amino-acid chain; its full sequence is Glyceraldehyde 3-phosphate phosphatase (228 aa).

It belongs to the HAD-like hydrolase superfamily. Mg(2+) serves as cofactor.

Functionally, catalyzes the dephosphorylation of D,L-glyceraldehyde 3-phosphate in vitro. This chain is Glyceraldehyde 3-phosphate phosphatase, found in Methanocaldococcus jannaschii (strain ATCC 43067 / DSM 2661 / JAL-1 / JCM 10045 / NBRC 100440) (Methanococcus jannaschii).